The sequence spans 535 residues: Pentatricopeptide repeat-containing protein At5g16420, mitochondrial (535 aa).

A mitochondrion-targeting transit peptide spans 1-28; it reads MFLSRVNPTRFPPFVASRRLFSASASAA. PPR repeat units lie at residues 82–112, 119–153, 154–189, 190–224, 225–259, 260–294, 295–329, 330–364, 365–395, 399–433, 434–468, and 469–503; these read NYDT…LRNS, GENL…GVKR, SVRS…GITP, NIFT…GLVP, NLVT…GWYP, DATT…EIEP, NEVT…SFMP, DSSL…NCMP, DNAL…FEKG, SLLT…KCKP, NAFT…GCFP, and NKTT…GKVD.

This sequence belongs to the PPR family. P subfamily.

Its subcellular location is the mitochondrion. The chain is Pentatricopeptide repeat-containing protein At5g16420, mitochondrial from Arabidopsis thaliana (Mouse-ear cress).